The following is a 992-amino-acid chain: Disks large-associated protein 4 (992 aa).

The span at 1–20 (MKGLGDSRPRHLSDSLDPPH) shows a compositional bias: basic and acidic residues. Disordered stretches follow at residues 1 to 31 (MKGL…DRNP) and 157 to 225 (MEGT…PASG). Gly residues predominate over residues 162–171 (GKVGGNGSKK). Residues 172-194 (GGLEDGKGRRAKSKERAKAGEPK) are compositionally biased toward basic and acidic residues. Over residues 199–208 (SNISGWWSSD) the composition is skewed to polar residues. Phosphoserine occurs at positions 206 and 207. Arg290 carries the omega-N-methylarginine modification. Residues 342–396 (TTLLSPRDMDSTAEGPIPCRRMRSGSYIKAMGDEDSDESGGGSPKPSPKTAARRQ) form a disordered region. A phosphoserine mark is found at Ser377, Ser380, Ser384, Ser388, Ser405, Ser415, and Ser421. Disordered stretches follow at residues 527 to 751 (SVSL…GPRQ), 763 to 798 (SYGD…AQPG), and 915 to 992 (TPEK…QTRL). Low complexity predominate over residues 528–554 (VSLQSLSPPPSTGSLSNSRTLPSSSCL). Residues 576–591 (VTVQSSTESAQDTYLD) show a composition bias toward polar residues. Ser580, Ser581, Ser609, Ser611, Ser665, and Ser744 each carry phosphoserine. Residues 600 to 620 (TSQSGLSNSSDSLDSSTRPPS) are compositionally biased toward low complexity. Thr915 carries the phosphothreonine modification. Basic and acidic residues-rich tracts occupy residues 915 to 925 (TPEKRKEEKKP) and 940 to 958 (VSRD…EARK). Polar residues predominate over residues 969–978 (VRQNSATESA). Ser973 bears the Phosphoserine mark.

This sequence belongs to the SAPAP family. Interacts with DLG1 and DLG4/PSD-95.

Its subcellular location is the membrane. In terms of biological role, may play a role in the molecular organization of synapses and neuronal cell signaling. Could be an adapter protein linking ion channel to the subsynaptic cytoskeleton. May induce enrichment of PSD-95/SAP90 at the plasma membrane. The protein is Disks large-associated protein 4 (Dlgap4) of Mus musculus (Mouse).